Here is a 67-residue protein sequence, read N- to C-terminus: MASYRNSRSRSRSRFRRRRGRRSRVRGRDARQGRSSRRRRRGKGRAHSGKKGRRSGSRRRKRNNENK.

Residues 1–67 are disordered; it reads MASYRNSRSR…RRRKRNNENK (67 aa). Basic residues-rich tracts occupy residues 7–25 and 34–67; these read SRSRSRSRFRRRRGRRSRV and RSSRRRRRGKGRAHSGKKGRRSGSRRRKRNNENK.

Belongs to the protamine P1 family. In terms of tissue distribution, testis.

It is found in the nucleus. The protein resides in the chromosome. Protamines substitute for histones in the chromatin of sperm during the haploid phase of spermatogenesis. They compact sperm DNA into a highly condensed, stable and inactive complex. In Isoodon macrourus (Short-nosed bandicoot), this protein is Sperm protamine P1 (PRM1).